The sequence spans 809 residues: Putative zinc metalloprotease TRE2 (809 aa).

2 stretches are compositionally biased toward polar residues: residues 1–12 (MRSSYQPVSTTN) and 20–30 (PTASSSHNLLM). The disordered stretch occupies residues 1-66 (MRSSYQPVST…PSYEFDIEDP (66 aa)). Residues 1–125 (MRSSYQPVST…KIGNPFILRR (125 aa)) are Cytoplasmic-facing. Low complexity predominate over residues 37-50 (SPPSSNDNSIETNI). Residues 126-146 (FFYIIFMSFIAYYVLSSGYLF) traverse the membrane as a helical; Signal-anchor for type II membrane protein segment. Over 147 to 809 (NEKASGSKGM…VEETNDIGYK (663 aa)) the chain is Extracellular. Residue asparagine 228 is glycosylated (N-linked (GlcNAc...) asparagine). The region spanning 255–349 (SNGKLSKVSL…STGDASGLNW (95 aa)) is the PA domain. N-linked (GlcNAc...) asparagine glycans are attached at residues asparagine 669 and asparagine 736.

Belongs to the peptidase M28 family. M28B subfamily.

It localises to the membrane. The sequence is that of Putative zinc metalloprotease TRE2 (TRE2) from Saccharomyces cerevisiae (strain ATCC 204508 / S288c) (Baker's yeast).